The sequence spans 107 residues: Essential MCU regulator, mitochondrial (107 aa).

Residues M1 to R52 constitute a mitochondrion transit peptide. Residues M1 to R52 form an interaction with MAIP1 region. Topologically, residues G54–F65 are mitochondrial matrix. A helical membrane pass occupies residues G66 to S85. The GXXXX[G/A/S] motif lies at G81–S85. Topologically, residues K86 to D107 are mitochondrial intermembrane.

Belongs to the SMDT1/EMRE family. As to quaternary structure, component of the uniplex complex, composed of MCU, EMRE/SMDT1, MICU1 and MICU2 (or MICU3) in a 4:4:1:1 stoichiometry. The number of EMRE/SMDT1 molecules is hovewer variable, ranging from 1 to 4 copies per uniplex complex, leading to uniplex complexes with distinct gatekeeping profiles. Interacts (via its C-terminal poly-Asp tail) with MCUR1; the interaction is direct. Unprocessed form interacts (via transit peptide) with MAIP1. In terms of processing, undergoes proteolytic degradation in neurons: degraded by AFG3L2 and SPG7 before SMDT1/EMRE assembly with the uniporter complex, limiting the availability of SMDT1/EMRE for MCU assembly and promoting efficient assembly of gatekeeper subunits with MCU.

The protein localises to the mitochondrion inner membrane. Its function is as follows. Essential regulatory subunit of the mitochondrial calcium uniporter complex (uniplex), a complex that mediates calcium uptake into mitochondria. Required to bridge the calcium-sensing proteins MICU1 with the calcium-conducting subunit MCU. Acts by mediating activation of MCU and retention of MICU1 to the MCU pore, in order to ensure tight regulation of the uniplex complex and appropriate responses to intracellular calcium signaling. In Homo sapiens (Human), this protein is Essential MCU regulator, mitochondrial.